We begin with the raw amino-acid sequence, 117 residues long: Fluoride-specific ion channel FluC 2 (117 aa).

The next 4 helical transmembrane spans lie at 4-24 (FLIG…GDII), 31-51 (KFPW…GIIT), 59-79 (LSMI…TFMY), and 94-114 (LIYI…GEFI). G69 and T72 together coordinate Na(+).

This sequence belongs to the fluoride channel Fluc/FEX (TC 1.A.43) family.

It is found in the cell membrane. It catalyses the reaction fluoride(in) = fluoride(out). Na(+) is not transported, but it plays an essential structural role and its presence is essential for fluoride channel function. In terms of biological role, fluoride-specific ion channel. Important for reducing fluoride concentration in the cell, thus reducing its toxicity. The chain is Fluoride-specific ion channel FluC 2 from Clostridium acetobutylicum (strain ATCC 824 / DSM 792 / JCM 1419 / IAM 19013 / LMG 5710 / NBRC 13948 / NRRL B-527 / VKM B-1787 / 2291 / W).